The primary structure comprises 307 residues: Small ribosomal subunit biogenesis GTPase RsgA (307 aa).

Positions Met1–Asn21 are disordered. The CP-type G domain occupies Arg85–Phe242. GTP-binding positions include Asn135–Asp138 and Gly184–Thr192. Cys266, Cys271, His273, and Cys279 together coordinate Zn(2+).

This sequence belongs to the TRAFAC class YlqF/YawG GTPase family. RsgA subfamily. As to quaternary structure, monomer. Associates with 30S ribosomal subunit, binds 16S rRNA. It depends on Zn(2+) as a cofactor.

It localises to the cytoplasm. In terms of biological role, one of several proteins that assist in the late maturation steps of the functional core of the 30S ribosomal subunit. Helps release RbfA from mature subunits. May play a role in the assembly of ribosomal proteins into the subunit. Circularly permuted GTPase that catalyzes slow GTP hydrolysis, GTPase activity is stimulated by the 30S ribosomal subunit. The sequence is that of Small ribosomal subunit biogenesis GTPase RsgA from Neisseria meningitidis serogroup B (strain ATCC BAA-335 / MC58).